Reading from the N-terminus, the 147-residue chain is Plasminogen receptor (KT) (147 aa).

The Extracellular segment spans residues 1–52; sequence MGFIFSKSMNESMKNQKEFMLMNARLQLERQLIMQSEMRERQMAMQIAWSRE. Residues 53–73 traverse the membrane as a helical segment; the sequence is FLKYFGTFFGLAAISLTAGAI. The Cytoplasmic portion of the chain corresponds to 74–78; sequence KKKKP. The chain crosses the membrane as a helical span at residues 79–99; that stretch reads AFLVPIVPLSFILTYQYDLGY. Over 100–147 the chain is Extracellular; it reads GTLLERMKGEAEDILETEKSKLQLPRGMITFESIEKARKEQSRFFIDK.

In terms of assembly, interacts with PLAT and PLAUR. As to expression, expressed in peripheral blood cells and monocytes. Expressed in adrenal medulla.

It is found in the cell membrane. In terms of biological role, receptor for plasminogen. Regulates urokinase plasminogen activator-dependent and stimulates tissue-type plasminogen activator-dependent cell surface plasminogen activation. Proposed to be part of a local catecholaminergic cell plasminogen activation system that regulates neuroendocrine prohormone processing. Involved in regulation of inflammatory response; regulates monocyte chemotactic migration and matrix metalloproteinase activation, such as of MMP2 and MMP9. In Homo sapiens (Human), this protein is Plasminogen receptor (KT) (PLGRKT).